Reading from the N-terminus, the 334-residue chain is L-lactate dehydrogenase B chain (334 aa).

Position 2 is an N-acetylalanine (Ala-2). N6-acetyllysine is present on Lys-7. Phosphoserine is present on Ser-44. NAD(+)-binding positions include 53–58 and Arg-100; that span reads DVLEDK. Lys-58 carries the post-translational modification N6-acetyllysine. Residue Arg-107 participates in substrate binding. At Lys-119 the chain carries N6-acetyllysine. Asn-139 lines the NAD(+) pocket. Asn-139 and Arg-170 together coordinate substrate. The Proton acceptor role is filled by His-194. Residue Tyr-240 is modified to Phosphotyrosine. Thr-249 is a binding site for substrate. N6-acetyllysine is present on Lys-329.

Belongs to the LDH/MDH superfamily. LDH family. In terms of assembly, homotetramer. Interacts with PTEN upstream reading frame protein MP31; the interaction leads to inhibition of mitochondrial lactate dehydrogenase activity, preventing conversion of lactate to pyruvate in mitochondria.

The protein resides in the cytoplasm. Its subcellular location is the mitochondrion inner membrane. The catalysed reaction is (S)-lactate + NAD(+) = pyruvate + NADH + H(+). The protein operates within fermentation; pyruvate fermentation to lactate; (S)-lactate from pyruvate: step 1/1. Its function is as follows. Interconverts simultaneously and stereospecifically pyruvate and lactate with concomitant interconversion of NADH and NAD(+). The chain is L-lactate dehydrogenase B chain (LDHB) from Bos taurus (Bovine).